The chain runs to 631 residues: tRNA uridine 5-carboxymethylaminomethyl modification enzyme MnmG (631 aa).

15 to 20 (GAGHAG) is a binding site for FAD. The interval 203-232 (TPPRVDGNTVDYSKTQEEPGDKEPRHFSYT) is disordered. The span at 216–232 (KTQEEPGDKEPRHFSYT) shows a compositional bias: basic and acidic residues. 276–290 (GPRYCPSIEDKVVRF) is an NAD(+) binding site.

The protein belongs to the MnmG family. As to quaternary structure, homodimer. Heterotetramer of two MnmE and two MnmG subunits. FAD serves as cofactor.

It is found in the cytoplasm. Its function is as follows. NAD-binding protein involved in the addition of a carboxymethylaminomethyl (cmnm) group at the wobble position (U34) of certain tRNAs, forming tRNA-cmnm(5)s(2)U34. This Lactobacillus gasseri (strain ATCC 33323 / DSM 20243 / BCRC 14619 / CIP 102991 / JCM 1131 / KCTC 3163 / NCIMB 11718 / NCTC 13722 / AM63) protein is tRNA uridine 5-carboxymethylaminomethyl modification enzyme MnmG.